Consider the following 680-residue polypeptide: Translation factor GUF1 homolog, chloroplastic (680 aa).

The transit peptide at 1–51 (MATATASRLAVPAPRTSPQAPGRRRPAAPLPSAPPRPRALSAAPRGRVVCP) directs the protein to the chloroplast. The segment at 1 to 68 (MATATASRLA…ASTTDAGQDR (68 aa)) is disordered. Positions 28-37 (APLPSAPPRP) are enriched in pro residues. Residues 38 to 60 (RALSAAPRGRVVCPAAPASSPAS) are compositionally biased toward low complexity. A tr-type G domain is found at 75–256 (SNIRNFSIIA…AIVTKIPPPQ (182 aa)). GTP contacts are provided by residues 84-91 (AHIDHGKS), 149-153 (DTPGH), and 203-206 (NKID).

It belongs to the TRAFAC class translation factor GTPase superfamily. Classic translation factor GTPase family. LepA subfamily.

It localises to the plastid. The protein localises to the chloroplast. The catalysed reaction is GTP + H2O = GDP + phosphate + H(+). In terms of biological role, promotes chloroplast protein synthesis. May act as a fidelity factor of the translation reaction, by catalyzing a one-codon backward translocation of tRNAs on improperly translocated ribosomes. In Oryza sativa subsp. japonica (Rice), this protein is Translation factor GUF1 homolog, chloroplastic.